The primary structure comprises 321 residues: Glucokinase (321 aa).

Residue 8–13 (GDVGGT) coordinates ATP.

The protein belongs to the bacterial glucokinase family.

Its subcellular location is the cytoplasm. The catalysed reaction is D-glucose + ATP = D-glucose 6-phosphate + ADP + H(+). The chain is Glucokinase from Salmonella paratyphi B (strain ATCC BAA-1250 / SPB7).